A 680-amino-acid polypeptide reads, in one-letter code: tRNA 5-methylaminomethyl-2-thiouridine biosynthesis bifunctional protein MnmC (680 aa).

Residues 1–245 (MSHPPIQTAT…KREMLTGILP (245 aa)) form a tRNA (mnm(5)s(2)U34)-methyltransferase region. Positions 270–680 (IGGGIVSALT…PVQQRVSVLS (411 aa)) are FAD-dependent cmnm(5)s(2)U34 oxidoreductase.

In the N-terminal section; belongs to the methyltransferase superfamily. tRNA (mnm(5)s(2)U34)-methyltransferase family. The protein in the C-terminal section; belongs to the DAO family. FAD serves as cofactor.

It localises to the cytoplasm. The catalysed reaction is 5-aminomethyl-2-thiouridine(34) in tRNA + S-adenosyl-L-methionine = 5-methylaminomethyl-2-thiouridine(34) in tRNA + S-adenosyl-L-homocysteine + H(+). Catalyzes the last two steps in the biosynthesis of 5-methylaminomethyl-2-thiouridine (mnm(5)s(2)U) at the wobble position (U34) in tRNA. Catalyzes the FAD-dependent demodification of cmnm(5)s(2)U34 to nm(5)s(2)U34, followed by the transfer of a methyl group from S-adenosyl-L-methionine to nm(5)s(2)U34, to form mnm(5)s(2)U34. The chain is tRNA 5-methylaminomethyl-2-thiouridine biosynthesis bifunctional protein MnmC from Yersinia enterocolitica serotype O:8 / biotype 1B (strain NCTC 13174 / 8081).